The primary structure comprises 399 residues: Exodeoxyribonuclease 7 large subunit (399 aa).

Belongs to the XseA family. As to quaternary structure, heterooligomer composed of large and small subunits.

The protein localises to the cytoplasm. The catalysed reaction is Exonucleolytic cleavage in either 5'- to 3'- or 3'- to 5'-direction to yield nucleoside 5'-phosphates.. Bidirectionally degrades single-stranded DNA into large acid-insoluble oligonucleotides, which are then degraded further into small acid-soluble oligonucleotides. This chain is Exodeoxyribonuclease 7 large subunit, found in Clostridium beijerinckii (strain ATCC 51743 / NCIMB 8052) (Clostridium acetobutylicum).